Consider the following 344-residue polypeptide: uncharacterized protein (344 aa).

Topologically, residues 1–98 (MIDFVKSRDT…NNDEIGIWNY (98 aa)) are cytoplasmic. The chain crosses the membrane as a helical span at residues 99–119 (ISVAEMGGVLLFLSYWIWTCL). A topological domain (lumenal) is located at residue histidine 120. A helical membrane pass occupies residues 121–141 (FSKIIFPAQKVICLYIFLFAL). Over 142 to 198 (NQTLQECIEEYVFSSECIKYRQFYSVYEIIDFLRTNFYRLFVIYCALGFGITRTVPK) the chain is Cytoplasmic. A helical membrane pass occupies residues 199-219 (YLMIKGISIVIALCSVYWISL). Over 220–222 (YKD) the chain is Lumenal. The chain crosses the membrane as a helical span at residues 223–243 (VYVVSEIFDMIQYEVSPAIWV). The Cytoplasmic portion of the chain corresponds to 244 to 273 (YSICHLLKQCTSVTTYENASKARFFRRMLN). Residues 274–294 (AFIFIFCASPMLHYLSNIIFG) traverse the membrane as a helical segment. Topologically, residues 295 to 344 (NFDYRLSVIIGDLFTFMEKIAFPCYIMFPTHNEALAYNRNVAEEAQEKMI) are lumenal.

The protein belongs to the UPF0742 family.

Its subcellular location is the endoplasmic reticulum. It is found in the membrane. This is an uncharacterized protein from Schizosaccharomyces pombe (strain 972 / ATCC 24843) (Fission yeast).